Reading from the N-terminus, the 162-residue chain is 6,7-dimethyl-8-ribityllumazine synthase (162 aa).

5-amino-6-(D-ribitylamino)uracil is bound by residues Phe22, 56–58 (TFE), and 80–82 (AVI). Residue 85-86 (GT) coordinates (2S)-2-hydroxy-3-oxobutyl phosphate. His88 (proton donor) is an active-site residue. Met113 provides a ligand contact to 5-amino-6-(D-ribitylamino)uracil. (2S)-2-hydroxy-3-oxobutyl phosphate is bound at residue Arg127.

This sequence belongs to the DMRL synthase family.

The enzyme catalyses (2S)-2-hydroxy-3-oxobutyl phosphate + 5-amino-6-(D-ribitylamino)uracil = 6,7-dimethyl-8-(1-D-ribityl)lumazine + phosphate + 2 H2O + H(+). The protein operates within cofactor biosynthesis; riboflavin biosynthesis; riboflavin from 2-hydroxy-3-oxobutyl phosphate and 5-amino-6-(D-ribitylamino)uracil: step 1/2. Functionally, catalyzes the formation of 6,7-dimethyl-8-ribityllumazine by condensation of 5-amino-6-(D-ribitylamino)uracil with 3,4-dihydroxy-2-butanone 4-phosphate. This is the penultimate step in the biosynthesis of riboflavin. This is 6,7-dimethyl-8-ribityllumazine synthase from Anaeromyxobacter dehalogenans (strain 2CP-C).